The primary structure comprises 671 residues: Probable ATP-dependent RNA helicase ddx41 (671 aa).

Coiled-coil stretches lie at residues 19-43 (IPLK…QPQQ) and 100-154 (LDQK…DMEE). Composition is skewed to low complexity over residues 33 to 83 (LNNL…NNDN) and 125 to 139 (IEND…NNNG). Disordered regions lie at residues 33–88 (LNNL…FEDE) and 125–148 (IEND…KEEK). The Q motif motif lies at 222 to 250 (TTFKEMKIPKPVIDVLLEKGIKKPSPIQV). A Helicase ATP-binding domain is found at 253–438 (LPVILSGRDM…RSALVLPVEV (186 aa)). 266–273 (AYTGSGKT) serves as a coordination point for ATP. Residues 386–389 (DEAD) carry the DEAD box motif. In terms of domain architecture, Helicase C-terminal spans 449–609 (NVTQEVEFVK…KVPPALLEIP (161 aa)). Residues 617–636 (KLQDRNGNTGGGADDDDTKP) form a disordered region. The segment at 635–652 (KPCEYCDGRGHRLVNCPK) adopts a CCHC-type zinc-finger fold.

The protein belongs to the DEAD box helicase family. DDX41 subfamily.

It is found in the nucleus. The enzyme catalyses ATP + H2O = ADP + phosphate + H(+). The polypeptide is Probable ATP-dependent RNA helicase ddx41 (ddx41) (Dictyostelium discoideum (Social amoeba)).